We begin with the raw amino-acid sequence, 363 residues long: 3-isopropylmalate dehydrogenase (363 aa).

Residue 78–91 (GKKWDTLPINERPE) participates in NAD(+) binding. Residues Arg-99, Arg-109, Arg-138, and Asp-227 each contribute to the substrate site. Mg(2+) is bound by residues Asp-227, Asp-251, and Asp-255. Residue 285 to 297 (GSAPDIQGKNIAN) coordinates NAD(+).

Belongs to the isocitrate and isopropylmalate dehydrogenases family. LeuB type 1 subfamily. As to quaternary structure, homodimer. The cofactor is Mg(2+). Requires Mn(2+) as cofactor.

The protein resides in the cytoplasm. It carries out the reaction (2R,3S)-3-isopropylmalate + NAD(+) = 4-methyl-2-oxopentanoate + CO2 + NADH. It participates in amino-acid biosynthesis; L-leucine biosynthesis; L-leucine from 3-methyl-2-oxobutanoate: step 3/4. Its function is as follows. Catalyzes the oxidation of 3-carboxy-2-hydroxy-4-methylpentanoate (3-isopropylmalate) to 3-carboxy-4-methyl-2-oxopentanoate. The product decarboxylates to 4-methyl-2 oxopentanoate. The chain is 3-isopropylmalate dehydrogenase from Buchnera aphidicola subsp. Diuraphis noxia.